The primary structure comprises 269 residues: Monofunctional glycosyltransferase (269 aa).

The helical transmembrane segment at 46–66 (ILLTILIIIALFIGIMYFLST) threads the bilayer.

Belongs to the glycosyltransferase 51 family.

Its subcellular location is the cell membrane. The enzyme catalyses [GlcNAc-(1-&gt;4)-Mur2Ac(oyl-L-Ala-gamma-D-Glu-L-Lys-D-Ala-D-Ala)](n)-di-trans,octa-cis-undecaprenyl diphosphate + beta-D-GlcNAc-(1-&gt;4)-Mur2Ac(oyl-L-Ala-gamma-D-Glu-L-Lys-D-Ala-D-Ala)-di-trans,octa-cis-undecaprenyl diphosphate = [GlcNAc-(1-&gt;4)-Mur2Ac(oyl-L-Ala-gamma-D-Glu-L-Lys-D-Ala-D-Ala)](n+1)-di-trans,octa-cis-undecaprenyl diphosphate + di-trans,octa-cis-undecaprenyl diphosphate + H(+). The protein operates within cell wall biogenesis; peptidoglycan biosynthesis. Its function is as follows. Peptidoglycan polymerase that catalyzes glycan chain elongation using lipid-linked disaccharide-pentapeptide as the substrate. The chain is Monofunctional glycosyltransferase from Staphylococcus aureus (strain Newman).